The sequence spans 434 residues: RHOMBOID-like protein 9, chloroplastic (434 aa).

A chloroplast-targeting transit peptide spans 1 to 68 (MALFPLHHEV…SPRRRLCLVR (68 aa)). The next 8 helical transmembrane spans lie at 182 to 202 (FYAVSILASINVGVCLFEAAA), 209 to 229 (MGLLSLPLLYGAKINDLILAG), 238 to 258 (MFLHSGIPHVALSSWALLTFG), 267 to 287 (LFTFCLIYILGGVSGNFMSFL), 289 to 309 (TADPTVGGTGPAFALIGAWLV), 326 to 346 (LFQKAIIMTGFGLILSHFGPI), 352 to 372 (LGALIAGIVYGFFTCPVLQLG), and 399 to 419 (FLLFTIFVAVIVTSLLLIGDG).

Belongs to the peptidase S54 family.

Its subcellular location is the plastid. It localises to the chloroplast membrane. Its function is as follows. Probable rhomboid-type serine protease that catalyzes intramembrane proteolysis. This chain is RHOMBOID-like protein 9, chloroplastic, found in Arabidopsis thaliana (Mouse-ear cress).